The following is a 304-amino-acid chain: N-carbamoyl-D-amino acid hydrolase (304 aa).

Positions 5-276 (MILAVGQQGP…DEVITAAVDL (272 aa)) constitute a CN hydrolase domain. Active-site residues include glutamate 47, lysine 127, and cysteine 172.

The catalysed reaction is an N-carbamoyl-D-amino acid + H2O + 2 H(+) = a D-alpha-amino acid + NH4(+) + CO2. The enzyme catalyzes the hydrolysis of N-carbamoyl-D-amino acids to the corresponding which are useful intermediates in the preparation of beta-lactam antibiotics. Industrial production of beta-lactam antibiotics is now being developed using this enzyme. This chain is N-carbamoyl-D-amino acid hydrolase, found in Agrobacterium sp. (strain KNK712).